The following is a 60-amino-acid chain: Large ribosomal subunit protein bL33 (60 aa).

It belongs to the bacterial ribosomal protein bL33 family.

In Flavobacterium johnsoniae (strain ATCC 17061 / DSM 2064 / JCM 8514 / BCRC 14874 / CCUG 350202 / NBRC 14942 / NCIMB 11054 / UW101) (Cytophaga johnsonae), this protein is Large ribosomal subunit protein bL33.